A 105-amino-acid chain; its full sequence is Large ribosomal subunit protein uL24 (105 aa).

The protein belongs to the universal ribosomal protein uL24 family. Part of the 50S ribosomal subunit.

Functionally, one of two assembly initiator proteins, it binds directly to the 5'-end of the 23S rRNA, where it nucleates assembly of the 50S subunit. One of the proteins that surrounds the polypeptide exit tunnel on the outside of the subunit. This is Large ribosomal subunit protein uL24 from Aliivibrio salmonicida (strain LFI1238) (Vibrio salmonicida (strain LFI1238)).